Consider the following 305-residue polypeptide: tRNA dimethylallyltransferase 1 (305 aa).

ATP is bound at residue Gly-10–Thr-17. Thr-12–Thr-17 contributes to the substrate binding site. An interaction with substrate tRNA region spans residues Asp-35–Gln-38.

This sequence belongs to the IPP transferase family. In terms of assembly, monomer. Requires Mg(2+) as cofactor.

The enzyme catalyses adenosine(37) in tRNA + dimethylallyl diphosphate = N(6)-dimethylallyladenosine(37) in tRNA + diphosphate. Catalyzes the transfer of a dimethylallyl group onto the adenine at position 37 in tRNAs that read codons beginning with uridine, leading to the formation of N6-(dimethylallyl)adenosine (i(6)A). This is tRNA dimethylallyltransferase 1 from Syntrophus aciditrophicus (strain SB).